The chain runs to 242 residues: MAKVSMRDMLQAGVHFGHQTRYWNPKMKSYIFGARSKVHIINLEKTVPMFDDAMNFISSVAAKKGKVLFVGTKRAASEAVKDAAGRCDQFYVNHRWLGGMLTNWKTVRQSIKRLKDLETQSQDGTFEKLTKKEALMRTREMDKLEKSLGGIKNMGGLPDVLFVVDADHEHIAIKEANNLGIPVVSIVDTNSNPDGVDYVIPGNDDAIRAVQLYLNAAADTVLEARAQDIVVQAEQDGFVEAE.

This sequence belongs to the universal ribosomal protein uS2 family.

This chain is Small ribosomal subunit protein uS2, found in Aeromonas salmonicida (strain A449).